The following is a 512-amino-acid chain: Maturase K (512 aa).

It belongs to the intron maturase 2 family. MatK subfamily.

Its subcellular location is the plastid. The protein localises to the chloroplast. Usually encoded in the trnK tRNA gene intron. Probably assists in splicing its own and other chloroplast group II introns. The sequence is that of Maturase K from Lilium regale (Regal lily).